A 207-amino-acid polypeptide reads, in one-letter code: Alpha/beta-tubulin-N-acetyltransferase 9 (207 aa).

In terms of domain architecture, N-acetyltransferase spans 35 to 180 (EELQRLTASE…QEVTLRLTVS (146 aa)).

Belongs to the acetyltransferase family. GNAT subfamily.

The catalysed reaction is N-terminal L-methionyl-[tubulin] + acetyl-CoA = N-terminal N(alpha)-acetyl-L-methionyl-[tubulin] + CoA + H(+). In terms of biological role, N-acetyltransferase that mediates the acetylation of the N-terminal residues of alpha- and beta-tubulin. This Homo sapiens (Human) protein is Alpha/beta-tubulin-N-acetyltransferase 9 (NAT9).